A 388-amino-acid chain; its full sequence is Methylthioribose-1-phosphate isomerase (388 aa).

Residue Asp252 is the Proton donor of the active site.

The protein belongs to the eIF-2B alpha/beta/delta subunits family. MtnA subfamily.

It is found in the cytoplasm. Its subcellular location is the nucleus. It catalyses the reaction 5-(methylsulfanyl)-alpha-D-ribose 1-phosphate = 5-(methylsulfanyl)-D-ribulose 1-phosphate. The protein operates within amino-acid biosynthesis; L-methionine biosynthesis via salvage pathway; L-methionine from S-methyl-5-thio-alpha-D-ribose 1-phosphate: step 1/6. In terms of biological role, catalyzes the interconversion of methylthioribose-1-phosphate (MTR-1-P) into methylthioribulose-1-phosphate (MTRu-1-P). In Verticillium alfalfae (strain VaMs.102 / ATCC MYA-4576 / FGSC 10136) (Verticillium wilt of alfalfa), this protein is Methylthioribose-1-phosphate isomerase.